Consider the following 2238-residue polypeptide: MDDIVNQLFDLLRKHFPARPKVTEQITLVTCQNDAKMILTEGFKLLSLLVELDSAEANNCTHNSDSLTIEGILRKEGIMSIALPRIVPDGFSLYGNVLILLETFVRVNPVSFEQKYNQDMSKLLSLKDDLSLCGITLVPLVDGRTNYYNRFVDDWVIERFRWLLLQLIKFVRESGEEIEELEYQRLITSLSKLENQSLGFENIEKLPQTGLKYRDELKKHMFGNLSSKMKESEIQENLINVLKEFFIKEYKNNKSLHKFVFTNRDGLLAKLDQITHHSEHPVDCMSCSSKLYSIIDKLGTLKRQPLHSDYHPIYAKMWHSDSLSQAEQIYLKLLSQCNKIKSAKLLNTRRNTLLFLDLIMVNFIVHSWKQNPEVLTEYRRCGLMAGQLALFSNDRYFDLNELRNKLINKLKNCENWIAKCVHQLKKQEFVALDDVLVWATVPDFESLELITTSLELKRFKLQYGKDKVDHNEHPIGPLSEETFFRNLNVLSSVCLALVNSMKTSFTSKTVINERRASNHFGEVDLIECYCQRFFLSKDLVGILSYQKTGEKSRCYSISLISNGELEYIGSFYCDPKRFFLPIFSQIVLLNMSREMMLWLADLNLNDSLVGDKLRKLILLIVTNPSKRNQTFLQGLRYFIMAYVNQFHHVELMDRLIVPVKSYCESCLQRISFDIFRLILEGDYDNEHMTRKFKFLLNVSYLCHLITKETPDRLTDQIKCFEKFMEPKLKFESVIVNPSLTENMTEDEEAQVLKGVDKLLGKSLSCSTDLTSPGVSKTLLSMCVSSFNRGLLNVNGHLRQDPYRPNFTSTALDLSSNKSVVVPKLDELGNPISRYDYELLVSSCVTNLAEGFKTKGKFKLDINCQEYTIMRNLTNLVLKNEDKSDAKIKGEKPCSFELSQWMETLSEEQLEVLEKLKGDVNIALGKLKEKGRSKSNSTLKEGVKRLDSGNTLAGCADPQQVLVNLWSEFGVMKQILVEVSLHEIKDFDPDIIPPQMIQKLVFKVNNSNYKSLFFLDSVINPCPLELLIKNMTTATFDDGELFECFKYLLITAGFDQKLGTYEHKNRSRFGFKFEALKVREEGRMSSRESNSEAIARRLDKSVFTNSALRNLCFYSDESPISYSHVSPDVGKLKFGLSYKEQVGSNRELYVGDLNTKLMTRLIEDFSESVVSNMSYSCLNNEAEFEKAITDMKMCVNLGDMSLSLDHSKWGPHMSPVIFAAFLQGLDLKYGPSLCKLNTDPIITLLSWHIHKVVEVPYNVIHAYVTGMIKRQLGLMNMSGSTITESFVHRLLKEKREPLSHVMSVIDMGQGILHNMSDLYGLVTEQFINYAIHFLFDMNTTSYTSSDDQISMIKIGSGMCNFESLKVIEEWETILNFHAFISTKFNKFVSPKTVAGTFAAEFKSRFFVWGEEVPLLTKFVSAALHNVKCKTPVQLSETVDTICDQCVANGVSVEIVSYICNRTNRLIRYSGFGEHPFLNVENLDVKDWVDGSRGYRLQRNIELHLESDGCTSFIRQAARKVFSNIKSGKIVEQALVDLVQEDGDKAITGFLRSVGVSEEDIALLCRIRWINLCAHGDLRLVLRTKLMSSRRIIETEEIPSLIKSIQSKLSKNFVKGAKKILAESINKSAFQSSIASGFIGFCQSVGSKCVRTGEGGFYYIKELKSKVDLYCPCEVCARWKGVTYCSSSCLKIESFTRPLMWDYFSLVLSNACELGEWVFEDVEYPKDINFLRNPNLFWLVKPRVSCQIEEKLGLTHILQSIRRNYPQLFETHLSPFMSDFQAGRTLGTMTVKFLDVCVALDLANENLGIVKHFLKNRRHDIYIVKQDESSQSHIRCQKSICVDVELTSTQVCQNFMTQLIMSSLVQPLVLTSSELKKFNWFQQVLTLETDEDVDLGLLTDFALQVKKFNVDRAMHSEDLSAGYISSTVSVTTFSLSKPIFLQQIDSDFIGGTEDRKDFIQMIKSEFTKNSIDLQFVIQISHVKRALRFNLKRTTVYTLIVRTSILKEVILNSLGQEDQSVELVVDDLELFCSGHDGNHFTLDAAPLIVQEPLINGNLKFDLVSRLEEEDLTFSYSESLPSFHFNFEKYKHELCNKFSYHLSGPVIVDEPLVLDRGVILHGGRKLTTLQFDFSADRIMQALSELESLSSRDLFLFNLWVYSDQTKSKLYIHQDKLLLLVESYLSELNSSLARYDSWLNLGNYMICYSKSFKCLMISDTNGRNRLKGILCRRLIEEEVQDIE.

Positions 26-284 (ITLVTCQNDA…THHSEHPVDC (259 aa)) are endonuclease. Mn(2+)-binding residues include Glu-51, Asp-89, and Glu-102. Residue Lys-115 is part of the active site. The RdRp catalytic domain maps to 1188–1387 (TDMKMCVNLG…FISTKFNKFV (200 aa)). A Mg(2+)-binding site is contributed by Asp-1346.

Belongs to the Bunyavirales RNA polymerase family. In terms of assembly, homomultimer; the oligomeric structure is essential for the polymerase activity. Interacts with nucleoprotein N. Interacts with protein Z; this interaction inhibits viral transcription and replication, Z partially blocks the product exit tunnel for the releasing nascent RNA product. Mn(2+) is required as a cofactor. It depends on Mg(2+) as a cofactor.

It localises to the virion. Its subcellular location is the host cytoplasm. The catalysed reaction is RNA(n) + a ribonucleoside 5'-triphosphate = RNA(n+1) + diphosphate. RNA-dependent RNA polymerase, which is responsible for the replication and transcription of the viral RNA genome using antigenomic RNA as an intermediate. During transcription, synthesizes subgenomic RNAs and assures their capping by a cap-snatching mechanism, which involves the endonuclease activity cleaving the host capped pre-mRNAs. These short capped RNAs are then used as primers for viral transcription. The 3'-end of subgenomic mRNAs molecules are heterogeneous and not polyadenylated. The replicase function is to direct synthesis of antigenomic and genomic RNA which are encapsidated and non capped. As a consequence of the use of the same enzyme for both transcription and replication, these mechanisms need to be well coordinated. These processes may be regulated by proteins N and Z in a dose-dependent manner. Z protein inhibits the viral polymerase L und thus the viral transcription and RNA synthesis. This chain is RNA-directed RNA polymerase L, found in Calomys callosus (Large vesper mouse).